Consider the following 223-residue polypeptide: Cytidylate kinase (223 aa).

Residue 10–18 (GPAGAGKST) coordinates ATP.

It belongs to the cytidylate kinase family. Type 1 subfamily.

It is found in the cytoplasm. The enzyme catalyses CMP + ATP = CDP + ADP. It carries out the reaction dCMP + ATP = dCDP + ADP. The protein is Cytidylate kinase of Exiguobacterium sibiricum (strain DSM 17290 / CCUG 55495 / CIP 109462 / JCM 13490 / 255-15).